The sequence spans 616 residues: Homeodomain-interacting protein kinase 4 (616 aa).

In terms of domain architecture, Protein kinase spans tyrosine 11–valine 347. Residues leucine 17–valine 25 and lysine 40 each bind ATP. Residue aspartate 136 is the Proton acceptor of the active site. The tract at residues histidine 486–histidine 616 is disordered. Over residues lysine 496–serine 511 the composition is skewed to polar residues. Residue serine 511 is modified to Phosphoserine.

It belongs to the protein kinase superfamily. CMGC Ser/Thr protein kinase family. HIPK subfamily. In terms of processing, autophosphorylated.

It is found in the cytoplasm. It catalyses the reaction L-seryl-[protein] + ATP = O-phospho-L-seryl-[protein] + ADP + H(+). It carries out the reaction L-threonyl-[protein] + ATP = O-phospho-L-threonyl-[protein] + ADP + H(+). Its function is as follows. Protein kinase that phosphorylates human TP53 at Ser-9, and thus induces TP53 repression of BIRC5 promoter. May act as a corepressor of transcription factors (Potential). The chain is Homeodomain-interacting protein kinase 4 (HIPK4) from Homo sapiens (Human).